A 152-amino-acid polypeptide reads, in one-letter code: Small ribosomal subunit protein uS11 (152 aa).

The interval Val-133–Leu-152 is disordered. Positions Arg-143 to Leu-152 are enriched in basic residues.

It belongs to the universal ribosomal protein uS11 family. In terms of assembly, component of the small ribosomal subunit. Part of the small subunit (SSU) processome, composed of more than 70 proteins and the RNA chaperone small nucleolar RNA (snoRNA) U3.

Its subcellular location is the cytoplasm. The protein resides in the nucleus. It localises to the nucleolus. Functionally, component of the small ribosomal subunit. The ribosome is a large ribonucleoprotein complex responsible for the synthesis of proteins in the cell. Part of the small subunit (SSU) processome, first precursor of the small eukaryotic ribosomal subunit. During the assembly of the SSU processome in the nucleolus, many ribosome biogenesis factors, an RNA chaperone and ribosomal proteins associate with the nascent pre-rRNA and work in concert to generate RNA folding, modifications, rearrangements and cleavage as well as targeted degradation of pre-ribosomal RNA by the RNA exosome. This chain is Small ribosomal subunit protein uS11 (rps14), found in Dictyostelium discoideum (Social amoeba).